Here is a 121-residue protein sequence, read N- to C-terminus: Fluoride-specific ion channel FluC 2 (121 aa).

The next 4 helical transmembrane spans lie at 3 to 23 (YLFV…LSTL), 27 to 47 (SGLP…MGYL), 64 to 84 (GVTT…FELV), and 92 to 112 (IALL…FCWF). G71 and T74 together coordinate Na(+).

The protein belongs to the fluoride channel Fluc/FEX (TC 1.A.43) family.

The protein resides in the cell membrane. It carries out the reaction fluoride(in) = fluoride(out). With respect to regulation, na(+) is not transported, but it plays an essential structural role and its presence is essential for fluoride channel function. Functionally, fluoride-specific ion channel. Important for reducing fluoride concentration in the cell, thus reducing its toxicity. The polypeptide is Fluoride-specific ion channel FluC 2 (Staphylococcus haemolyticus (strain JCSC1435)).